A 269-amino-acid chain; its full sequence is tRNA pseudouridine synthase A (269 aa).

Asp52 acts as the Nucleophile in catalysis. Tyr110 lines the substrate pocket.

The protein belongs to the tRNA pseudouridine synthase TruA family. Homodimer.

It catalyses the reaction uridine(38/39/40) in tRNA = pseudouridine(38/39/40) in tRNA. Its function is as follows. Formation of pseudouridine at positions 38, 39 and 40 in the anticodon stem and loop of transfer RNAs. The sequence is that of tRNA pseudouridine synthase A from Bacteroides thetaiotaomicron (strain ATCC 29148 / DSM 2079 / JCM 5827 / CCUG 10774 / NCTC 10582 / VPI-5482 / E50).